Here is a 379-residue protein sequence, read N- to C-terminus: Alkanesulfonate monooxygenase (379 aa).

The protein belongs to the SsuD family.

The enzyme catalyses an alkanesulfonate + FMNH2 + O2 = an aldehyde + FMN + sulfite + H2O + 2 H(+). Functionally, catalyzes the desulfonation of aliphatic sulfonates. In Pseudomonas syringae pv. syringae (strain B728a), this protein is Alkanesulfonate monooxygenase.